A 381-amino-acid polypeptide reads, in one-letter code: Creatine kinase B-type (381 aa).

Ser4 bears the Phosphoserine mark. The 88-residue stretch at 11 to 98 (KLRFPAEDEF…FDPIIEDRHG (88 aa)) folds into the Phosphagen kinase N-terminal domain. At Thr35 the chain carries Phosphothreonine. Lys45 participates in a covalent cross-link: Glycyl lysine isopeptide (Lys-Gly) (interchain with G-Cter in ubiquitin). Val72 is a creatine binding site. A compositionally biased stretch (basic and acidic residues) spans 96-110 (RHGGYKPSDEHKTDL). Positions 96 to 123 (RHGGYKPSDEHKTDLNPDNLQGGDDLDP) are disordered. Glycyl lysine isopeptide (Lys-Gly) (interchain with G-Cter in ubiquitin) cross-links involve residues Lys101 and Lys107. Residue Tyr125 is modified to Phosphotyrosine. Residues 125-367 (YVLSSRVRTG…KLLIEMEQRL (243 aa)) form the Phosphagen kinase C-terminal domain. ATP-binding positions include 128–132 (SSRVR), Arg130, Arg132, and His191. The interval 130-138 (RVRTGRSIR) is internal MTS-like signal. Phosphoserine is present on Ser199. Glu232 provides a ligand contact to creatine. Arg236 is a binding site for ATP. Tyr269 is subject to 3'-nitrotyrosine. Residue Ser285 participates in creatine binding. Residues Arg292, 292 to 296 (RAGVH), Arg320, 320 to 325 (RGTGGV), and Asp335 each bind ATP. Thr322 carries the phosphothreonine modification. A Glycyl lysine isopeptide (Lys-Gly) (interchain with G-Cter in ubiquitin) cross-link involves residue Lys381.

The protein belongs to the ATP:guanido phosphotransferase family. As to quaternary structure, dimer of identical or non-identical chains, which can be either B (brain type) or M (muscle type). With MM being the major form in skeletal muscle and myocardium, MB existing in myocardium, and BB existing in many tissues, especially brain. Interacts with SLC12A6 (via C-terminus); the interaction may be required for SLC12A6 potassium-chloride cotransport activity. In terms of processing, ubiquitinated by the ECS(ASB9) complex, leading to its degradation by the proteasome.

The protein localises to the cytoplasm. The protein resides in the cytosol. Its subcellular location is the mitochondrion. It localises to the cell membrane. The catalysed reaction is creatine + ATP = N-phosphocreatine + ADP + H(+). Functionally, reversibly catalyzes the transfer of phosphate between ATP and various phosphogens (e.g. creatine phosphate). Creatine kinase isoenzymes play a central role in energy transduction in tissues with large, fluctuating energy demands, such as skeletal muscle, heart, brain and spermatozoa. Acts as a key regulator of adaptive thermogenesis as part of the futile creatine cycle: localizes to the mitochondria of thermogenic fat cells and acts by mediating phosphorylation of creatine to initiate a futile cycle of creatine phosphorylation and dephosphorylation. During the futile creatine cycle, creatine and N-phosphocreatine are in a futile cycle, which dissipates the high energy charge of N-phosphocreatine as heat without performing any mechanical or chemical work. This is Creatine kinase B-type (CKB) from Sus scrofa (Pig).